A 700-amino-acid polypeptide reads, in one-letter code: Elongation factor G 1 (700 aa).

The tr-type G domain occupies 8–290; sequence QNYRNIGISA…AVIEFMPSPI (283 aa). Residues 17–24, 88–92, and 142–145 each bind GTP; these read AHIDAGKT, DTPGH, and NKMD.

Belongs to the TRAFAC class translation factor GTPase superfamily. Classic translation factor GTPase family. EF-G/EF-2 subfamily.

The protein resides in the cytoplasm. Functionally, catalyzes the GTP-dependent ribosomal translocation step during translation elongation. During this step, the ribosome changes from the pre-translocational (PRE) to the post-translocational (POST) state as the newly formed A-site-bound peptidyl-tRNA and P-site-bound deacylated tRNA move to the P and E sites, respectively. Catalyzes the coordinated movement of the two tRNA molecules, the mRNA and conformational changes in the ribosome. The protein is Elongation factor G 1 of Polaromonas sp. (strain JS666 / ATCC BAA-500).